The primary structure comprises 604 residues: Protein glass (604 aa).

4 disordered regions span residues 111 to 139 (ISTTPPASSGNGSSNNGAGGGSSGNHGYW), 199 to 237 (NSHNHGQMHSQHQQHQHQQSQVQASHVGNSLLQSSGGNN), 359 to 400 (LPPL…SPTS), and 414 to 434 (EDEEDSNEDLDGDEGSSGGEM). Composition is skewed to low complexity over residues 117 to 126 (ASSGNGSSNN) and 200 to 237 (SHNHGQMHSQHQQHQHQQSQVQASHVGNSLLQSSGGNN). Positions 414–427 (EDEEDSNEDLDGDE) are enriched in acidic residues. 5 consecutive C2H2-type zinc fingers follow at residues 437–459 (NLCRLCGKTYARPSTLKTHLRTH), 465–487 (YRCPDCNKSFSQAANLTAHVRTH), 493–515 (FRCPICDRRFSQSSSVTTHMRTH), 521–543 (YRCSSCKKSFSDSSTLTKHLRIH), and 549–571 (YQCKLCLLRFSQSGNLNRHMRVH). Residues 566-604 (RHMRVHGNNNSSNGSNGATGVGGESSTGSGVGGGNSLLT) are disordered. Positions 572-581 (GNNNSSNGSN) are enriched in low complexity. The segment covering 582 to 604 (GATGVGGESSTGSGVGGGNSLLT) has biased composition (gly residues).

It localises to the nucleus. Transcription factor required for gene expression specific to photoreceptor cells. The sequence is that of Protein glass (gl) from Drosophila melanogaster (Fruit fly).